Here is a 258-residue protein sequence, read N- to C-terminus: Imidazole glycerol phosphate synthase subunit HisF (258 aa).

Active-site residues include aspartate 11 and aspartate 130.

It belongs to the HisA/HisF family. As to quaternary structure, heterodimer of HisH and HisF.

It localises to the cytoplasm. It carries out the reaction 5-[(5-phospho-1-deoxy-D-ribulos-1-ylimino)methylamino]-1-(5-phospho-beta-D-ribosyl)imidazole-4-carboxamide + L-glutamine = D-erythro-1-(imidazol-4-yl)glycerol 3-phosphate + 5-amino-1-(5-phospho-beta-D-ribosyl)imidazole-4-carboxamide + L-glutamate + H(+). It functions in the pathway amino-acid biosynthesis; L-histidine biosynthesis; L-histidine from 5-phospho-alpha-D-ribose 1-diphosphate: step 5/9. Functionally, IGPS catalyzes the conversion of PRFAR and glutamine to IGP, AICAR and glutamate. The HisF subunit catalyzes the cyclization activity that produces IGP and AICAR from PRFAR using the ammonia provided by the HisH subunit. This Buchnera aphidicola subsp. Baizongia pistaciae (strain Bp) protein is Imidazole glycerol phosphate synthase subunit HisF.